The primary structure comprises 521 residues: MLLLLLLLLPLCWAVEVKRPRGVSLSNHHFYEESKPFTCLDGTATIPFDQVNDDYCDCKDGSDEPGTAACPNGSFHCTNTGYKPLYILSSRVNDGVCDCCDGTDEYNSGTVCENTCREKGRKEKESLQQLAEVTREGFRLKKILIEEWKTAREEKQSKLLELQAGKKSLEDQVETLRAAKEEAERPEKEAKDQHRKLWEEQQAAAKARREQERAASAFQELDDNMDGMVSLAELQTHPELDTDGDGALSEEEAQALLSGDTQTDTTSFYDRVWAAIRDKYRSEVPPTDIPVPEETEPKEEKPPVLPPTEEEEEEEEEPEEEEEEEEEEEEAPPPLQPPQPPSPTEDEKMPPYDEETQAIIDAAQEARSKFEEVERSLKEMEESIRSLEQEISFDFGPSGEFAYLYSQCYELTTNEYVYRLCPFKLVSQKPKHGGSPTSLGTWGSWAGPDHDKFSAMKYEQGTGCWQGPNRSTTVRLLCGKETVVTSTTEPSRCEYLMELMTPAACPEPPPEAPSDGDHDEL.

The signal sequence occupies residues 1–14 (MLLLLLLLLPLCWA). Position 24 is a phosphoserine (Ser-24). 2 LDL-receptor class A domains span residues 37–71 (FTCLDGTATIPFDQVNDDYCDCKDGSDEPGTAACP) and 69–113 (ACPN…TVCE). Disulfide bonds link Cys-39–Cys-58 and Cys-56–Cys-70. Asp-49 is a binding site for substrate. Residues Gln-50, Asp-53, Tyr-55, Asp-57, Asp-63, and Glu-64 each coordinate Ca(2+). Substrate is bound at residue Asp-53. N-linked (GlcNAc...) asparagine glycosylation is present at Asn-72. 3 disulfides stabilise this stretch: Cys-77–Cys-99, Cys-97–Cys-112, and Cys-100–Cys-116. A Phosphoserine; by PKC modification is found at Ser-89. Residues Arg-91, Asp-94, Val-96, Asp-98, Asp-104, and Glu-105 each coordinate Ca(2+). N6-succinyllysine is present on Lys-166. Ser-168 carries the phosphoserine modification. EF-hand domains lie at 209-244 (REQERAASAFQELDDNMDGMVSLAELQTHPELDTDG) and 245-290 (DGAL…TDIP). 5 residues coordinate Ca(2+): Asp-222, Asn-224, Asp-226, Met-228, and Glu-233. Disordered stretches follow at residues 226-267 (DGMV…DTTS) and 280-350 (YRSE…EKMP). Acidic residues-rich tracts occupy residues 241–253 (DTDGDGALSEEEA) and 308–331 (TEEEEEEEEEPEEEEEEEEEEEEA). The segment covering 332–343 (PPPLQPPQPPSP) has biased composition (pro residues). A phosphoserine; by PKC mark is found at Ser-376 and Ser-383. Residues 406–507 (SQCYELTTNE…ELMTPAACPE (102 aa)) enclose the MRH domain. Cys-408 and Cys-421 are oxidised to a cystine. At Ser-427 the chain carries Phosphoserine; by PKC. 2 disulfide bridges follow: Cys-464-Cys-493 and Cys-478-Cys-505. A glycan (N-linked (GlcNAc...) asparagine) is linked at Asn-469. A Prevents secretion from ER motif is present at residues 518 to 521 (HDEL).

In terms of assembly, heterodimer of a catalytic alpha subunit (GANAB) and a beta subunit (PRKCSH). Binds glycosylated PTPRC. Expressed in kidney (at protein level).

It localises to the endoplasmic reticulum. It functions in the pathway glycan metabolism; N-glycan metabolism. Functionally, regulatory subunit of glucosidase II that cleaves sequentially the 2 innermost alpha-1,3-linked glucose residues from the Glc(2)Man(9)GlcNAc(2) oligosaccharide precursor of immature glycoproteins. Required for efficient PKD1/Polycystin-1 biogenesis and trafficking to the plasma membrane of the primary cilia. This Mus musculus (Mouse) protein is Glucosidase 2 subunit beta.